A 434-amino-acid chain; its full sequence is Alpha-enolase (434 aa).

Position 40 (Ser-40) interacts with Mg(2+). Substrate-binding residues include His-158 and Glu-167. Glu-210 acts as the Proton donor in catalysis. Asp-245, Glu-293, and Asp-318 together coordinate Mg(2+). Substrate contacts are provided by Glu-293 and Asp-318. Residue Lys-343 is the Proton acceptor of the active site. Substrate-binding positions include 370 to 373 and Lys-394; that span reads SHRS.

The protein belongs to the enolase family. Homodimer. Mg(2+) serves as cofactor.

It is found in the cytoplasm. It catalyses the reaction (2R)-2-phosphoglycerate = phosphoenolpyruvate + H2O. It functions in the pathway carbohydrate degradation; glycolysis; pyruvate from D-glyceraldehyde 3-phosphate: step 4/5. Both an enzyme and a lens structural protein. This Anas platyrhynchos (Mallard) protein is Alpha-enolase (ENO1).